The primary structure comprises 1392 residues: L-2-aminoadipate reductase (1392 aa).

K541 participates in a covalent cross-link: Glycyl lysine isopeptide (Lys-Gly) (interchain with G-Cter in ubiquitin). Residues S843–K920 form the Carrier domain. At S880 the chain carries O-(pantetheine 4'-phosphoryl)serine. K1276 is covalently cross-linked (Glycyl lysine isopeptide (Lys-Gly) (interchain with G-Cter in ubiquitin)).

The protein belongs to the ATP-dependent AMP-binding enzyme family. It depends on pantetheine 4'-phosphate as a cofactor.

The catalysed reaction is (S)-2-amino-6-oxohexanoate + NADP(+) + H2O = L-2-aminoadipate + NADPH + 2 H(+). It catalyses the reaction (S)-2-amino-6-oxohexanoate + NAD(+) + H2O = L-2-aminoadipate + NADH + 2 H(+). It carries out the reaction (S)-2-amino-6-oxohexanoate + AMP + diphosphate + NADP(+) = L-2-aminoadipate + ATP + NADPH + H(+). It participates in amino-acid biosynthesis; L-lysine biosynthesis via AAA pathway; L-lysine from L-alpha-aminoadipate (fungal route): step 1/3. Catalyzes the activation of alpha-aminoadipate by ATP-dependent adenylation and the reduction of activated alpha-aminoadipate by NADPH. The activated alpha-aminoadipate is bound to the phosphopantheinyl group of the enzyme itself before it is reduced to (S)-2-amino-6-oxohexanoate. This chain is L-2-aminoadipate reductase (LYS2), found in Saccharomyces cerevisiae (strain ATCC 204508 / S288c) (Baker's yeast).